A 130-amino-acid polypeptide reads, in one-letter code: MSNVPTELKYATSHEWVLHEGDGIYSVGITEHAQELLGDMVFIDLPEVGTVVAAGDDCAVAESVKAASDIYAPISGEVVEVNEDLENSPELVNSAPYTDGWLFRIKISDESDLDELLDAEGYQASLEEDE.

Positions 24–106 (IYSVGITEHA…YTDGWLFRIK (83 aa)) constitute a Lipoyl-binding domain. An N6-lipoyllysine modification is found at K65.

Belongs to the GcvH family. The glycine cleavage system is composed of four proteins: P, T, L and H. Requires (R)-lipoate as cofactor.

The glycine cleavage system catalyzes the degradation of glycine. The H protein shuttles the methylamine group of glycine from the P protein to the T protein. The chain is Glycine cleavage system H protein from Pectobacterium atrosepticum (strain SCRI 1043 / ATCC BAA-672) (Erwinia carotovora subsp. atroseptica).